A 52-amino-acid chain; its full sequence is ATP synthase F(1) complex subunit epsilon, mitochondrial (52 aa).

3 positions are modified to N6-acetyllysine; alternate: lysine 21, lysine 32, and lysine 37. An N6-succinyllysine; alternate mark is found at lysine 21, lysine 32, and lysine 37. Lysine 44 is modified (N6-acetyllysine).

It belongs to the eukaryotic ATPase epsilon family. In terms of assembly, component of the ATP synthase complex composed at least of ATP5F1A/subunit alpha, ATP5F1B/subunit beta, ATP5MC1/subunit c (homooctomer), MT-ATP6/subunit a, MT-ATP8/subunit 8, ATP5ME/subunit e, ATP5MF/subunit f, ATP5MG/subunit g, ATP5MK/subunit k, ATP5MJ/subunit j, ATP5F1C/subunit gamma, ATP5F1D/subunit delta, ATP5F1E/subunit epsilon, ATP5PF/subunit F6, ATP5PB/subunit b, ATP5PD/subunit d, ATP5PO/subunit OSCP. ATP synthase complex consists of a soluble F(1) head domain (subunits alpha(3) and beta(3)) - the catalytic core - and a membrane F(0) domain - the membrane proton channel (subunits c, a, 8, e, f, g, k and j). These two domains are linked by a central stalk (subunits gamma, delta, and epsilon) rotating inside the F1 region and a stationary peripheral stalk (subunits F6, b, d, and OSCP).

The protein resides in the mitochondrion. The protein localises to the mitochondrion inner membrane. Subunit epsilon, of the mitochondrial membrane ATP synthase complex (F(1)F(0) ATP synthase or Complex V) that produces ATP from ADP in the presence of a proton gradient across the membrane which is generated by electron transport complexes of the respiratory chain. ATP synthase complex consist of a soluble F(1) head domain - the catalytic core - and a membrane F(1) domain - the membrane proton channel. These two domains are linked by a central stalk rotating inside the F(1) region and a stationary peripheral stalk. During catalysis, ATP synthesis in the catalytic domain of F(1) is coupled via a rotary mechanism of the central stalk subunits to proton translocation. In vivo, can only synthesize ATP although its ATP hydrolase activity can be activated artificially in vitro. May be essential for the assembly of F(1) and may play an important role in the incorporation of the hydrophobic subunit c into the F(1)-c oligomer rotor of the mitochondrial ATP synthase complex. The protein is ATP synthase F(1) complex subunit epsilon, mitochondrial of Mus musculus (Mouse).